Here is a 658-residue protein sequence, read N- to C-terminus: Endoplasmic reticulum mannosyl-oligosaccharide 1,2-alpha-mannosidase (658 aa).

The Cytoplasmic segment spans residues 1–50 (MYPPPAPPPAPHRDFISVTLSLGESYDNSKSRRRRSCWRKWKQLSRLQRN). The helical; Signal-anchor for type II membrane protein transmembrane segment at 51-71 (VILFVLGFLILCGFLYSLHTA) threads the bilayer. The Lumenal segment spans residues 72–658 (DQWKALSGRP…AHPLPIWAPA (587 aa)). Residue Ser102 is modified to Phosphoserine. The tract at residues 123 to 142 (GPPHLQIRPPNTVSKDGMQD) is disordered. Glu289 serves as the catalytic Proton donor. Asp422 is a catalytic residue. An intrachain disulfide couples Cys486 to Cys515. The Proton donor role is filled by Glu529. Glu558 is a catalytic residue. Thr647 provides a ligand contact to Ca(2+).

This sequence belongs to the glycosyl hydrolase 47 family. The cofactor is Ca(2+).

Its subcellular location is the endoplasmic reticulum membrane. The catalysed reaction is N(4)-(alpha-D-Man-(1-&gt;2)-alpha-D-Man-(1-&gt;2)-alpha-D-Man-(1-&gt;3)-[alpha-D-Man-(1-&gt;2)-alpha-D-Man-(1-&gt;3)-[alpha-D-Man-(1-&gt;2)-alpha-D-Man-(1-&gt;6)]-alpha-D-Man-(1-&gt;6)]-beta-D-Man-(1-&gt;4)-beta-D-GlcNAc-(1-&gt;4)-beta-D-GlcNAc)-L-asparaginyl-[protein] (N-glucan mannose isomer 9A1,2,3B1,2,3) + 4 H2O = N(4)-(alpha-D-Man-(1-&gt;3)-[alpha-D-Man-(1-&gt;3)-[alpha-D-Man-(1-&gt;6)]-alpha-D-Man-(1-&gt;6)]-beta-D-Man-(1-&gt;4)-beta-D-GlcNAc-(1-&gt;4)-beta-D-GlcNAc)-L-asparaginyl-[protein] (N-glucan mannose isomer 5A1,2) + 4 beta-D-mannose. It carries out the reaction N(4)-(alpha-D-Man-(1-&gt;2)-alpha-D-Man-(1-&gt;2)-alpha-D-Man-(1-&gt;3)-[alpha-D-Man-(1-&gt;3)-[alpha-D-Man-(1-&gt;2)-alpha-D-Man-(1-&gt;6)]-alpha-D-Man-(1-&gt;6)]-beta-D-Man-(1-&gt;4)-beta-D-GlcNAc-(1-&gt;4)-beta-D-GlcNAc)-L-asparaginyl-[protein] (N-glucan mannose isomer 8A1,2,3B1,3) + 3 H2O = N(4)-(alpha-D-Man-(1-&gt;3)-[alpha-D-Man-(1-&gt;3)-[alpha-D-Man-(1-&gt;6)]-alpha-D-Man-(1-&gt;6)]-beta-D-Man-(1-&gt;4)-beta-D-GlcNAc-(1-&gt;4)-beta-D-GlcNAc)-L-asparaginyl-[protein] (N-glucan mannose isomer 5A1,2) + 3 beta-D-mannose. It functions in the pathway protein modification; protein glycosylation. Functionally, involved in glycoprotein quality control targeting of misfolded glycoproteins for degradation. It primarily trims a single alpha-1,2-linked mannose residue from Man(9)GlcNAc(2) to produce Man(8)GlcNAc(2), but at high enzyme concentrations, as found in the ER quality control compartment (ERQC), it further trims the carbohydrates to Man(5-6)GlcNAc(2). This is Endoplasmic reticulum mannosyl-oligosaccharide 1,2-alpha-mannosidase (Man1b1) from Mus musculus (Mouse).